We begin with the raw amino-acid sequence, 330 residues long: MKVVKAAAVQISPVLYSREATVEKVVKKIHELGQLGVQFATFPETVVPYYPYFSAVQTGIELLSGTEHLRLLDQAVTVPSPATDAIGEAARKAGMVVSIGVNERDGGTLYNTQLLFDADGTLIQRRRKITPTHFERMIWGQGDGSGLRAVDSKVGRIGQLACFEHNNPLARYALIADGEQIHSAMYPGSAFGEGFAQRMEINIRQHALESGAFVVNATAWLDADQQAQIIKDTGCGIGPISGGCFTTIVAPDGMLMAEPLRSGEGEVIVDLDFTLIDRRKMLMDSAGHYNRPELLSLMIDRTATAHVHERAAHPVSGAEQGPEDLRTPAA.

The region spanning 4–273 (VKAAAVQISP…EGEVIVDLDF (270 aa)) is the CN hydrolase domain. E44 (proton acceptor) is an active-site residue. The active-site Proton donor is K128. Residue C162 is the Nucleophile of the active site. A disordered region spans residues 310-330 (RAAHPVSGAEQGPEDLRTPAA).

This sequence belongs to the carbon-nitrogen hydrolase superfamily. Nitrilase family.

It carries out the reaction a nitrile + 2 H2O = a carboxylate + NH4(+). Its function is as follows. Nitrilases catalyze the mild hydrolytic conversion of organonitriles directly to the corresponding carboxylic acids. The polypeptide is Nitrilase 3 (Unknown prokaryotic organism).